Consider the following 296-residue polypeptide: Small ribosomal subunit biogenesis GTPase RsgA (296 aa).

Residues 65–226 enclose the CP-type G domain; sequence TNELIRPPIS…VADTPGFSSL (162 aa). Residues 114–117 and 169–177 each bind GTP; these read TKMD and GQSGVGKSS. Residues cysteine 250, cysteine 255, histidine 257, and cysteine 263 each contribute to the Zn(2+) site.

This sequence belongs to the TRAFAC class YlqF/YawG GTPase family. RsgA subfamily. As to quaternary structure, monomer. Associates with 30S ribosomal subunit, binds 16S rRNA. It depends on Zn(2+) as a cofactor.

The protein resides in the cytoplasm. One of several proteins that assist in the late maturation steps of the functional core of the 30S ribosomal subunit. Helps release RbfA from mature subunits. May play a role in the assembly of ribosomal proteins into the subunit. Circularly permuted GTPase that catalyzes slow GTP hydrolysis, GTPase activity is stimulated by the 30S ribosomal subunit. This is Small ribosomal subunit biogenesis GTPase RsgA from Bacillus velezensis (strain DSM 23117 / BGSC 10A6 / LMG 26770 / FZB42) (Bacillus amyloliquefaciens subsp. plantarum).